A 573-amino-acid chain; its full sequence is Kinesin light chain 1 (573 aa).

Residues 27-156 are a coiled coil; it reads KTKQVIQGLE…HLEFMNQLKK (130 aa). The segment covering 155–176 has biased composition (basic and acidic residues); the sequence is KKYDDDISPSEDKDTDSTKEPL. The segment at 155-203 is disordered; that stretch reads KKYDDDISPSEDKDTDSTKEPLDDLFPNDEDDPGQGIQQQHSSAAAAAQ. Ser-162 is subject to Phosphoserine. Residues 188–203 are compositionally biased toward low complexity; the sequence is GQGIQQQHSSAAAAAQ. TPR repeat units follow at residues 213 to 246, 255 to 288, 297 to 330, 339 to 372, and 381 to 414; these read LRTL…LEKT, ATML…REKT, AATL…REKV, AKQL…YQTK, and AKTK…AHER. Tyr-449 carries the phosphotyrosine modification. Ser-460 carries the phosphoserine modification. Residues 464–497 form a TPR 6 repeat; that stretch reads TTTLKNLGALYRRQGKFEAAETLEEAAMRSRKQG. 2 positions are modified to phosphoserine; by AMPK: Ser-521 and Ser-524. Residue Glu-547 is modified to Phosphoserine. Residues 553 to 573 are disordered; sequence SGRASFCGKRQQQQWPGRRHR.

The protein belongs to the kinesin light chain family. In terms of assembly, oligomeric complex composed of two heavy chains and two light chains. Interacts with SPAG9. Interacts with ATCAY; may link mitochondria to KLC1 and regulate mitochondria localization into neuron projections. Interacts (via TPR repeats) with TOR1A; the interaction associates TOR1A with the kinesin oligomeric complex. Interacts with BORCS5. Interacts with MAPK8IP3/JIP3 and NTRK2/TRKB; interaction with NTRK2/TRKB is mediated by MAPK8IP3/JIP3. Interacts with CLSTN1; phosphorylation at Ser-460 inhibits interaction with CLSTN1. (Microbial infection) Interacts with adenovirus hexon-interlacing protein; this interaction leads to capsid disruption at the nuclear pore complex during virus entry into host cell. Post-translationally, phosphorylation at Ser-460 by ERK inhibits interaction with CLSTN1 and localization to cytoplasmic vesicles. Found in a variety of tissues. Mostly abundant in brain and spine.

The protein resides in the cell projection. It is found in the growth cone. It localises to the cytoplasmic vesicle. Its subcellular location is the cytoplasm. The protein localises to the cytoskeleton. Functionally, kinesin is a microtubule-associated force-producing protein that may play a role in organelle transport. The light chain may function in coupling of cargo to the heavy chain or in the modulation of its ATPase activity. In Homo sapiens (Human), this protein is Kinesin light chain 1 (KLC1).